The sequence spans 307 residues: Elongation factor Ts (307 aa).

The tract at residues 80 to 83 (TDFV) is involved in Mg(2+) ion dislocation from EF-Tu.

This sequence belongs to the EF-Ts family.

It localises to the cytoplasm. Functionally, associates with the EF-Tu.GDP complex and induces the exchange of GDP to GTP. It remains bound to the aminoacyl-tRNA.EF-Tu.GTP complex up to the GTP hydrolysis stage on the ribosome. The protein is Elongation factor Ts of Bradyrhizobium sp. (strain ORS 278).